Consider the following 321-residue polypeptide: GTP 3',8-cyclase (321 aa).

The Radical SAM core domain maps to 5–227 (SYDRVVDYLR…DEGYDGASPS (223 aa)). Arginine 14 contacts GTP. Positions 21 and 25 each coordinate [4Fe-4S] cluster. Tyrosine 27 serves as a coordination point for S-adenosyl-L-methionine. A [4Fe-4S] cluster-binding site is contributed by cysteine 28. Arginine 64 contacts GTP. Residue glycine 68 coordinates S-adenosyl-L-methionine. Threonine 95 lines the GTP pocket. Serine 119 serves as a coordination point for S-adenosyl-L-methionine. Residue lysine 155 coordinates GTP. Methionine 189 lines the S-adenosyl-L-methionine pocket. [4Fe-4S] cluster is bound by residues cysteine 249 and cysteine 252. A GTP-binding site is contributed by 254 to 256 (RIR). A [4Fe-4S] cluster-binding site is contributed by cysteine 266.

It belongs to the radical SAM superfamily. MoaA family. As to quaternary structure, monomer and homodimer. Requires [4Fe-4S] cluster as cofactor.

The catalysed reaction is GTP + AH2 + S-adenosyl-L-methionine = (8S)-3',8-cyclo-7,8-dihydroguanosine 5'-triphosphate + 5'-deoxyadenosine + L-methionine + A + H(+). The protein operates within cofactor biosynthesis; molybdopterin biosynthesis. Catalyzes the cyclization of GTP to (8S)-3',8-cyclo-7,8-dihydroguanosine 5'-triphosphate. The sequence is that of GTP 3',8-cyclase from Sulfurimonas denitrificans (strain ATCC 33889 / DSM 1251) (Thiomicrospira denitrificans (strain ATCC 33889 / DSM 1251)).